A 73-amino-acid chain; its full sequence is Translation initiation factor IF-1 (73 aa).

Residues 1 to 73 form the S1-like domain; it reads MAKKDGVIEI…TRGRIVYRYK (73 aa).

Belongs to the IF-1 family. As to quaternary structure, component of the 30S ribosomal translation pre-initiation complex which assembles on the 30S ribosome in the order IF-2 and IF-3, IF-1 and N-formylmethionyl-tRNA(fMet); mRNA recruitment can occur at any time during PIC assembly.

Its subcellular location is the cytoplasm. In terms of biological role, one of the essential components for the initiation of protein synthesis. Stabilizes the binding of IF-2 and IF-3 on the 30S subunit to which N-formylmethionyl-tRNA(fMet) subsequently binds. Helps modulate mRNA selection, yielding the 30S pre-initiation complex (PIC). Upon addition of the 50S ribosomal subunit IF-1, IF-2 and IF-3 are released leaving the mature 70S translation initiation complex. In Leifsonia xyli subsp. xyli (strain CTCB07), this protein is Translation initiation factor IF-1.